A 20-amino-acid chain; its full sequence is Pregnancy-associated glycoprotein 57 (20 aa).

Belongs to the peptidase A1 family. In terms of processing, glycosylated.

It is found in the secreted. This is Pregnancy-associated glycoprotein 57 from Ovis aries (Sheep).